A 338-amino-acid polypeptide reads, in one-letter code: MKLGRYLAVSKDLAPAKFIIAKCIEVEEFKGLELNELWEIHNKVLKKVDFDNFDFNDLEYVKPNLLDLKVEIAKNIFKNCHFCEHRCYVNRETERGFCRIKESYYSTEFLHLGEERVLVPSHTIFFCGCNFKCVFCQNWDISQVYFDKTIPNHCIPYNPKEMAKIIKHKRDYSKNVNFVGGDPTPHLLSILKTLSYLDKNIPVVWNSNMYLTVEGMHLLKGVVDVYLTDFKFGNNECGERLSKVKNYFDIIKRNHLLIKDEEVIIRHLVMPNHLDCCTEKIFDFISKNLDNAVVNVMFQYRPEYKAKEYPDINRRLTYEEIEKALELAEKYNLDLIYD.

Residues 111–334 form the Radical SAM core domain; it reads HLGEERVLVP…LELAEKYNLD (224 aa). [4Fe-4S] cluster contacts are provided by Cys-129, Cys-133, and Cys-136.

The cofactor is [4Fe-4S] cluster.

This is an uncharacterized protein from Methanocaldococcus jannaschii (strain ATCC 43067 / DSM 2661 / JAL-1 / JCM 10045 / NBRC 100440) (Methanococcus jannaschii).